The primary structure comprises 144 residues: Maximins 11/H11 (144 aa).

A signal peptide spans 1–18 (MNFKYIVAVSFLIASAYA). Positions 19 to 43 (RSEENDEQSLSQRDVLEEESLREIR) are excised as a propeptide. The residue at position 70 (N70) is an Asparagine amide. The propeptide occupies 74 to 123 (TAEDHEVMKRLEAVMRDLDSLDYPEEASERETRGFNQEEIANLFTKKEKR). Isoleucine amide is present on I143.

The protein belongs to the bombinin family. In terms of tissue distribution, expressed by the skin glands.

The protein localises to the secreted. Maximin-11 shows antimicrobial activity against bacteria and against the fungus C.albicans. It has little hemolytic activity. Functionally, maximin-H11 shows antimicrobial activity against bacteria and against the fungus C.albicans. Shows strong hemolytic activity. The protein is Maximins 11/H11 of Bombina maxima (Giant fire-bellied toad).